A 364-amino-acid chain; its full sequence is Long-wave-sensitive opsin 1 (364 aa).

At 1–52 (MAHAWGPQRLAGGQPQANFEESTQGSIFTYTNSNSTRDPFEGPNYHIAPRWV) the chain is on the extracellular side. An O-linked (GlcNAc) serine glycan is attached at Ser22. Asn34 carries an N-linked (GlcNAc...) asparagine glycan. A helical transmembrane segment spans residues 53–77 (YHLTSAWMVFVVIASVFTNGLVLAA). The Cytoplasmic portion of the chain corresponds to 78–89 (TMRFKKLRHPLN). A helical transmembrane segment spans residues 90-115 (WILVNLAIADLAETIIASTISVVNQM). Residues 116 to 129 (YGYFVLGHPLCVVE) lie on the Extracellular side of the membrane. Residues Cys126 and Cys203 are joined by a disulfide bond. Residues 130-149 (GYTVSLCGITGLWSLAIISW) traverse the membrane as a helical segment. Topologically, residues 150-168 (ERWMVVCKPFGNVRFDAKL) are cytoplasmic. A helical transmembrane segment spans residues 169 to 192 (AITGIAFSWIWAAVWTAPPIFGWS). Topologically, residues 193-218 (RYWPHGLKTSCGPDVFSGSSYPGVQS) are extracellular. A helical transmembrane segment spans residues 219–246 (YMIVLMITCCFIPLSVIILCYLQVWLAI). Residues 247–268 (RAVAKQQKESESTQKAEKEVTR) lie on the Cytoplasmic side of the membrane. Residues 269 to 292 (MVMVMIFAYCLCWGPYTFFACFAA) form a helical membrane-spanning segment. Topologically, residues 293 to 300 (AHPGYAFH) are extracellular. The helical transmembrane segment at 301–325 (PLVAALPAYFAKSATIYNPIIYVFM) threads the bilayer. Lys312 bears the N6-(retinylidene)lysine mark. Residues 326-364 (NRQFRNCILQLFGKKVDDSSELSSVSKTEASSVSSVSPA) are Cytoplasmic-facing.

This sequence belongs to the G-protein coupled receptor 1 family. Opsin subfamily. Post-translationally, phosphorylated on some or all of the serine and threonine residues present in the C-terminal region. As to expression, expressed in retina (at protein level). Expressed in cone and/or rod photoreceptor cells (at protein level).

It localises to the membrane. In terms of biological role, visual pigments are the light-absorbing molecules that mediate vision. They consist of an apoprotein, opsin, covalently linked to cis-retinal. This Bos taurus (Bovine) protein is Long-wave-sensitive opsin 1 (OPN1LW).